The sequence spans 365 residues: tRNA-specific 2-thiouridylase MnmA (365 aa).

ATP contacts are provided by residues 6 to 13 (GMSGGVDS) and M32. The interval 92 to 94 (NPD) is interaction with target base in tRNA. Catalysis depends on C97, which acts as the Nucleophile. An intrachain disulfide couples C97 to C197. Residue G121 coordinates ATP. The interaction with tRNA stretch occupies residues 147–149 (KDQ). C197 functions as the Cysteine persulfide intermediate in the catalytic mechanism. The interaction with tRNA stretch occupies residues 315 to 316 (RY).

The protein belongs to the MnmA/TRMU family.

Its subcellular location is the cytoplasm. The catalysed reaction is S-sulfanyl-L-cysteinyl-[protein] + uridine(34) in tRNA + AH2 + ATP = 2-thiouridine(34) in tRNA + L-cysteinyl-[protein] + A + AMP + diphosphate + H(+). Functionally, catalyzes the 2-thiolation of uridine at the wobble position (U34) of tRNA, leading to the formation of s(2)U34. In Azoarcus sp. (strain BH72), this protein is tRNA-specific 2-thiouridylase MnmA.